The chain runs to 428 residues: Dihydroorotase (428 aa).

Residues histidine 59 and histidine 61 each contribute to the Zn(2+) site. Substrate contacts are provided by residues 61-63 (HFR) and asparagine 93. Aspartate 151, histidine 178, and histidine 231 together coordinate Zn(2+). Asparagine 277 contacts substrate. A Zn(2+)-binding site is contributed by aspartate 304. Aspartate 304 is a catalytic residue. Substrate contacts are provided by residues histidine 308 and 322–323 (FG).

The protein belongs to the metallo-dependent hydrolases superfamily. DHOase family. Class I DHOase subfamily. It depends on Zn(2+) as a cofactor.

It catalyses the reaction (S)-dihydroorotate + H2O = N-carbamoyl-L-aspartate + H(+). The protein operates within pyrimidine metabolism; UMP biosynthesis via de novo pathway; (S)-dihydroorotate from bicarbonate: step 3/3. Catalyzes the reversible cyclization of carbamoyl aspartate to dihydroorotate. This is Dihydroorotase from Bacillus licheniformis (strain ATCC 14580 / DSM 13 / JCM 2505 / CCUG 7422 / NBRC 12200 / NCIMB 9375 / NCTC 10341 / NRRL NRS-1264 / Gibson 46).